We begin with the raw amino-acid sequence, 101 residues long: Signal recognition particle 19 kDa protein (101 aa).

Belongs to the SRP19 family. Part of the signal recognition particle protein translocation system, which is composed of SRP and FtsY. Archaeal SRP consists of a 7S RNA molecule of 300 nucleotides and two protein subunits: SRP54 and SRP19.

It localises to the cytoplasm. In terms of biological role, involved in targeting and insertion of nascent membrane proteins into the cytoplasmic membrane. Binds directly to 7S RNA and mediates binding of the 54 kDa subunit of the SRP. The protein is Signal recognition particle 19 kDa protein of Methanosarcina mazei (strain ATCC BAA-159 / DSM 3647 / Goe1 / Go1 / JCM 11833 / OCM 88) (Methanosarcina frisia).